Here is a 224-residue protein sequence, read N- to C-terminus: UPF0441 protein PC1_0312 (224 aa).

The disordered stretch occupies residues 178 to 224 (PKTALAPKPATTSTITRGGFGETVAKQNSMQRSSASSSSSSSRSMGG). Positions 209–224 (RSSASSSSSSSRSMGG) are enriched in low complexity.

It belongs to the UPF0441 family.

The sequence is that of UPF0441 protein PC1_0312 from Pectobacterium carotovorum subsp. carotovorum (strain PC1).